Reading from the N-terminus, the 296-residue chain is Pre-mRNA-splicing factor CWC23 (296 aa).

Residues 14 to 86 enclose the J domain; sequence DLYKLLELNY…AKKAEYDQWV (73 aa).

Belongs to the DnaJ family. In terms of assembly, associated with the spliceosome.

It localises to the cytoplasm. Its subcellular location is the nucleus. Functionally, involved in pre-mRNA splicing. May be involved in endoplasmic reticulum-associated protein degradation (ERAD) and required for growth at low and high temperatures. The protein is Pre-mRNA-splicing factor CWC23 (CWC23) of Candida glabrata (strain ATCC 2001 / BCRC 20586 / JCM 3761 / NBRC 0622 / NRRL Y-65 / CBS 138) (Yeast).